The following is a 1385-amino-acid chain: Kinesin-like protein KIF15 (1385 aa).

Residues 1–24 are disordered; sequence MAPGCKSELRNVTNSHSNQPSNED. Over residues 10–21 the composition is skewed to polar residues; it reads RNVTNSHSNQPS. A Kinesin motor domain is found at 26–363; it reads AIKVFVRIRP…LNFAQRAKLI (338 aa). 109 to 116 lines the ATP pocket; sequence GQTGSGKT. Residues 368–1385 adopt a coiled-coil conformation; that stretch reads VVNEDTQGNV…NVFLKERKKE (1018 aa). The residue at position 1007 (lysine 1007) is an N6-acetyllysine. Serine 1139 and serine 1167 each carry phosphoserine. Residues 1222 to 1243 form a disordered region; the sequence is DMKRQGESSSQSRPDSQQLKNE. Residues 1228–1241 show a composition bias toward polar residues; it reads ESSSQSRPDSQQLK.

Belongs to the TRAFAC class myosin-kinesin ATPase superfamily. Kinesin family. KLP2 subfamily. As to quaternary structure, interacts with MKI67 and TPX2. In terms of tissue distribution, expressed in sympathetic neurons.

It is found in the cytoplasm. The protein resides in the cytoskeleton. Its subcellular location is the spindle. Its function is as follows. Plus-end directed kinesin-like motor enzyme involved in mitotic spindle assembly. This chain is Kinesin-like protein KIF15 (Kif15), found in Rattus norvegicus (Rat).